Consider the following 180-residue polypeptide: ATP-dependent protease subunit HslV (180 aa).

Thr-5 is a catalytic residue. Na(+) is bound by residues Gly-165, Cys-168, and Thr-171.

The protein belongs to the peptidase T1B family. HslV subfamily. A double ring-shaped homohexamer of HslV is capped on each side by a ring-shaped HslU homohexamer. The assembly of the HslU/HslV complex is dependent on binding of ATP.

It localises to the cytoplasm. The enzyme catalyses ATP-dependent cleavage of peptide bonds with broad specificity.. With respect to regulation, allosterically activated by HslU binding. Functionally, protease subunit of a proteasome-like degradation complex believed to be a general protein degrading machinery. In Helicobacter pylori (strain P12), this protein is ATP-dependent protease subunit HslV.